The primary structure comprises 533 residues: Beta-glucosidase 24 (533 aa).

Positions 1–26 (MVLQKLPLMSIGLLWLLIIVGPLVNA) are cleaved as a signal peptide. An a beta-D-glucoside-binding site is contributed by glutamine 58. N-linked (GlcNAc...) asparagine glycosylation is found at asparagine 64 and asparagine 88. A beta-D-glucoside is bound by residues histidine 161 and 206–207 (NE). Glutamate 207 (proton donor) is an active-site residue. Cysteine 226 and cysteine 239 are joined by a disulfide. Residue tyrosine 355 coordinates a beta-D-glucoside. N-linked (GlcNAc...) asparagine glycosylation occurs at asparagine 388. Position 427 (glutamate 427) interacts with a beta-D-glucoside. The active-site Nucleophile is the glutamate 427. N-linked (GlcNAc...) asparagine glycans are attached at residues asparagine 437, asparagine 442, and asparagine 470. Residues tryptophan 477, 484-485 (EW), and phenylalanine 493 each bind a beta-D-glucoside. Asparagine 503 is a glycosylation site (N-linked (GlcNAc...) asparagine). Residues 530–533 (KDEL) carry the Prevents secretion from ER motif.

This sequence belongs to the glycosyl hydrolase 1 family.

The protein resides in the endoplasmic reticulum lumen. It carries out the reaction Hydrolysis of terminal, non-reducing beta-D-glucosyl residues with release of beta-D-glucose.. The protein is Beta-glucosidase 24 of Arabidopsis thaliana (Mouse-ear cress).